The sequence spans 279 residues: MTSFPASHGFGPRKRGYQMDLTNVQPVENKPAWISMKSPLEKEIANEYEALKVTERKEDTQDYNEPELHNSNDPTVDLYADTYATQAATESDSELEDALFSQLDEFDDTAYREQRLEMLKKEFARVEAAKEKGHMQFLTVENEREVMDFTLSSKKVVIHFYHPDFIRCKIIDSHLEKIAKVHWETKFIRIEAANAPFLVVKLGLKVLPAVLCYVNSQLVDKIIGFADLGNKDDFETSLLEFRLLKSSAIDRLKEESSSNKSIYHDELQNNQSDDSDFFE.

A compositionally biased stretch (basic and acidic residues) spans 56-70 (RKEDTQDYNEPELHN). The segment at 56 to 75 (RKEDTQDYNEPELHNSNDPT) is disordered. The region spanning 137–248 (FLTVENEREV…LEFRLLKSSA (112 aa)) is the Thioredoxin domain. Residues 254-267 (EESSSNKSIYHDEL) are compositionally biased toward basic and acidic residues. Positions 254-279 (EESSSNKSIYHDELQNNQSDDSDFFE) are disordered. Residues Ser272 and Ser275 each carry the phosphoserine modification.

It belongs to the phosducin family.

The protein resides in the cytoplasm. It localises to the nucleus. Its function is as follows. Inhibits early G-protein signaling events following pheromone stimulation. May help create heterodimerizable beta-tubulin by facilitating the efficient transfer of nascent beta-tubulin polypeptides to the folding apparatus. This Schizosaccharomyces pombe (strain 972 / ATCC 24843) (Fission yeast) protein is Thioredoxin domain-containing protein plp1 (plp1).